The primary structure comprises 525 residues: C6 finger transcription factor fsqA (525 aa).

Residues 12–53 constitute a DNA-binding region (zn(2)-C6 fungal-type); sequence CDRCRGQKLRCVGAGKPIPNSSSRLLRNEIPCDRCRRAKVEC. 3 disordered regions span residues 80–142, 204–260, and 327–371; these read RSSS…LGDM, EWNS…EPAG, and RARS…ARSS. Residues 95–115 show a composition bias toward polar residues; the sequence is PPNSLVTAASKPHPNSLSFNH. Positions 327–337 are enriched in polar residues; that stretch reads RARSQWSSLPE.

The protein localises to the nucleus. Its function is as follows. Transcription factor that regulates the expression of the gene cluster that mediates the biosynthesis of the isoquinoline alkaloids fumisoquin A, fumisoquin B and fumisoquin C; as well as small amounts of fumipyrrole as a shunt metabolite. The products of the cluster lead to a brown coloration and are important for growth and conidiation. The chain is C6 finger transcription factor fsqA from Aspergillus fumigatus (strain ATCC MYA-4609 / CBS 101355 / FGSC A1100 / Af293) (Neosartorya fumigata).